Consider the following 506-residue polypeptide: Maturase K (506 aa).

The protein belongs to the intron maturase 2 family. MatK subfamily.

The protein localises to the plastid. The protein resides in the chloroplast. Functionally, usually encoded in the trnK tRNA gene intron. Probably assists in splicing its own and other chloroplast group II introns. The polypeptide is Maturase K (Lathyrus aphaca (Yellow vetchling)).